Consider the following 34-residue polypeptide: Small ribosomal subunit protein uS2c (34 aa).

The protein belongs to the universal ribosomal protein uS2 family.

The protein localises to the plastid. Its subcellular location is the chloroplast. The polypeptide is Small ribosomal subunit protein uS2c (rps2) (Ochrosphaera neapolitana).